The chain runs to 293 residues: 4-hydroxy-tetrahydrodipicolinate synthase (293 aa).

Pyruvate is bound at residue T50. Y138 serves as the catalytic Proton donor/acceptor. Residue K166 is the Schiff-base intermediate with substrate of the active site. V206 provides a ligand contact to pyruvate.

This sequence belongs to the DapA family. In terms of assembly, homotetramer; dimer of dimers.

Its subcellular location is the cytoplasm. It carries out the reaction L-aspartate 4-semialdehyde + pyruvate = (2S,4S)-4-hydroxy-2,3,4,5-tetrahydrodipicolinate + H2O + H(+). It functions in the pathway amino-acid biosynthesis; L-lysine biosynthesis via DAP pathway; (S)-tetrahydrodipicolinate from L-aspartate: step 3/4. Catalyzes the condensation of (S)-aspartate-beta-semialdehyde [(S)-ASA] and pyruvate to 4-hydroxy-tetrahydrodipicolinate (HTPA). This is 4-hydroxy-tetrahydrodipicolinate synthase from Cutibacterium acnes (strain DSM 16379 / KPA171202) (Propionibacterium acnes).